A 240-amino-acid polypeptide reads, in one-letter code: Uridylate kinase (240 aa).

12–15 (KLSG) is an ATP binding site. Gly54 contacts UMP. 2 residues coordinate ATP: Gly55 and Arg59. Residues Asp74 and 135–142 (TGNPFFTT) each bind UMP. 3 residues coordinate ATP: Thr162, Tyr168, and Asp171.

The protein belongs to the UMP kinase family. As to quaternary structure, homohexamer.

It is found in the cytoplasm. The enzyme catalyses UMP + ATP = UDP + ADP. It functions in the pathway pyrimidine metabolism; CTP biosynthesis via de novo pathway; UDP from UMP (UMPK route): step 1/1. With respect to regulation, inhibited by UTP. Its function is as follows. Catalyzes the reversible phosphorylation of UMP to UDP. This is Uridylate kinase from Xanthomonas campestris pv. campestris (strain ATCC 33913 / DSM 3586 / NCPPB 528 / LMG 568 / P 25).